Here is a 76-residue protein sequence, read N- to C-terminus: Tautomerase PptA (76 aa).

Pro2 functions as the Proton acceptor; via imino nitrogen in the catalytic mechanism.

This sequence belongs to the 4-oxalocrotonate tautomerase family. PptA subfamily. In terms of assembly, homodimer.

It localises to the cytoplasm. This is Tautomerase PptA from Pectobacterium atrosepticum (strain SCRI 1043 / ATCC BAA-672) (Erwinia carotovora subsp. atroseptica).